Reading from the N-terminus, the 231-residue chain is Ribonuclease 3 (231 aa).

In terms of domain architecture, RNase III spans Q5 to G134. Residue E47 coordinates Mg(2+). The active site involves D51. Mg(2+)-binding residues include N120 and E123. The active site involves E123. A DRBM domain is found at D160–H229.

This sequence belongs to the ribonuclease III family. As to quaternary structure, homodimer. It depends on Mg(2+) as a cofactor.

The protein resides in the cytoplasm. The enzyme catalyses Endonucleolytic cleavage to 5'-phosphomonoester.. In terms of biological role, digests double-stranded RNA. Involved in the processing of primary rRNA transcript to yield the immediate precursors to the large and small rRNAs (23S and 16S). Processes some mRNAs, and tRNAs when they are encoded in the rRNA operon. Processes pre-crRNA and tracrRNA of type II CRISPR loci if present in the organism. This is Ribonuclease 3 from Lactococcus lactis subsp. cremoris (strain SK11).